The primary structure comprises 193 residues: Dual-action ribosomal maturation protein DarP (193 aa).

Residues 1–10 (MRGRDEETGE) are compositionally biased toward basic and acidic residues. 2 disordered regions span residues 1 to 20 (MRGR…SQQR) and 171 to 193 (QEQG…EDDE). A compositionally biased stretch (acidic residues) spans 178 to 193 (GDSELEDGESASEDDE).

This sequence belongs to the DarP family.

The protein localises to the cytoplasm. Functionally, member of a network of 50S ribosomal subunit biogenesis factors which assembles along the 30S-50S interface, preventing incorrect 23S rRNA structures from forming. Promotes peptidyl transferase center (PTC) maturation. In Xanthomonas axonopodis pv. citri (strain 306), this protein is Dual-action ribosomal maturation protein DarP.